Here is a 588-residue protein sequence, read N- to C-terminus: MTSSIECQNIFRSLQLLDLFIKIGVKNLILCPGSRSAPLAIAAGELYKYGILNVFNSIDERSAGFHSLGISTASGDISLVVTTSGSAVGNLLPAAVEADRSCKSIVFITADRPLRLKNCGSNQTVNQEAFLNSVCRSTLSTNLNGIHKNNDDDILKIVKMIKKQLLQSPGPIHLNIPFEKPLDISLKNKRKTLKVFETLYLNKTCKFLKQNEQNKSIHFSKRIFESLDLSNSGIIIVGPYQGSIKDLVSFNNSLEKIQSITGWPVFADPVSGVSADLRGLVENWELIIKKNNNVIKCNQILRLGPLSSSNNLEKFLSDFDGIQILVKENNRRKLDPIKKSLEYEFGLTNFVNQLLGTYSDDQKKKKPLINLVKVLRREGQKISKILNEQIFLNKEITEYKLANFVPKIWPENYPIMLSASSPIRDWLTFSENGTLTRKCFSFRGASGIDGTLSLALGIARITQPLLLVTGDLALIHDINGFLIENSIDLNLTVLLINNNGGNIFNNLYKNNLEKEELKKLFLMPKSINWENLAKAFQVPIKIVSDLNKLPESFEWSLSMQKSVIIKVDINVDNEMKERSLILKKILNN.

It belongs to the TPP enzyme family. MenD subfamily. In terms of assembly, homodimer. The cofactor is Mg(2+). Mn(2+) serves as cofactor. Thiamine diphosphate is required as a cofactor.

It catalyses the reaction isochorismate + 2-oxoglutarate + H(+) = 5-enolpyruvoyl-6-hydroxy-2-succinyl-cyclohex-3-ene-1-carboxylate + CO2. It participates in quinol/quinone metabolism; 1,4-dihydroxy-2-naphthoate biosynthesis; 1,4-dihydroxy-2-naphthoate from chorismate: step 2/7. It functions in the pathway cofactor biosynthesis; phylloquinone biosynthesis. In terms of biological role, catalyzes the thiamine diphosphate-dependent decarboxylation of 2-oxoglutarate and the subsequent addition of the resulting succinic semialdehyde-thiamine pyrophosphate anion to isochorismate to yield 2-succinyl-5-enolpyruvyl-6-hydroxy-3-cyclohexene-1-carboxylate (SEPHCHC). This Prochlorococcus marinus (strain MIT 9515) protein is 2-succinyl-5-enolpyruvyl-6-hydroxy-3-cyclohexene-1-carboxylate synthase.